The sequence spans 193 residues: dTTP/UTP pyrophosphatase (193 aa).

Asp77 serves as the catalytic Proton acceptor.

It belongs to the Maf family. YhdE subfamily. The cofactor is a divalent metal cation.

It localises to the cytoplasm. The enzyme catalyses dTTP + H2O = dTMP + diphosphate + H(+). The catalysed reaction is UTP + H2O = UMP + diphosphate + H(+). Its function is as follows. Nucleoside triphosphate pyrophosphatase that hydrolyzes dTTP and UTP. May have a dual role in cell division arrest and in preventing the incorporation of modified nucleotides into cellular nucleic acids. This is dTTP/UTP pyrophosphatase from Phocaeicola vulgatus (strain ATCC 8482 / DSM 1447 / JCM 5826 / CCUG 4940 / NBRC 14291 / NCTC 11154) (Bacteroides vulgatus).